Here is a 212-residue protein sequence, read N- to C-terminus: Orotate phosphoribosyltransferase (212 aa).

5-phospho-alpha-D-ribose 1-diphosphate is bound by residues Arg95, Lys99, His101, and 121–129; that span reads DDLITTGGS. Orotate is bound at residue Thr125.

Belongs to the purine/pyrimidine phosphoribosyltransferase family. PyrE subfamily. Homodimer. It depends on Mg(2+) as a cofactor.

The catalysed reaction is orotidine 5'-phosphate + diphosphate = orotate + 5-phospho-alpha-D-ribose 1-diphosphate. It functions in the pathway pyrimidine metabolism; UMP biosynthesis via de novo pathway; UMP from orotate: step 1/2. Catalyzes the transfer of a ribosyl phosphate group from 5-phosphoribose 1-diphosphate to orotate, leading to the formation of orotidine monophosphate (OMP). This chain is Orotate phosphoribosyltransferase, found in Lactobacillus johnsonii (strain CNCM I-12250 / La1 / NCC 533).